The following is a 299-amino-acid chain: uncharacterized protein (299 aa).

The next 6 membrane-spanning stretches (helical) occupy residues 32–52 (FILL…YLHL), 56–76 (SMII…SILY), 199–219 (LAIG…LLGA), 220–240 (YLIA…VKPE), 246–266 (FEIV…PIFG), and 273–293 (FLIS…ILKF).

Its subcellular location is the cell membrane. This is an uncharacterized protein from Methanocaldococcus jannaschii (strain ATCC 43067 / DSM 2661 / JAL-1 / JCM 10045 / NBRC 100440) (Methanococcus jannaschii).